Here is a 191-residue protein sequence, read N- to C-terminus: 7-methyl-GTP pyrophosphatase (191 aa).

Aspartate 70 acts as the Proton acceptor in catalysis.

This sequence belongs to the Maf family. YceF subfamily. A divalent metal cation serves as cofactor.

It localises to the cytoplasm. It catalyses the reaction N(7)-methyl-GTP + H2O = N(7)-methyl-GMP + diphosphate + H(+). In terms of biological role, nucleoside triphosphate pyrophosphatase that hydrolyzes 7-methyl-GTP (m(7)GTP). May have a dual role in cell division arrest and in preventing the incorporation of modified nucleotides into cellular nucleic acids. The protein is 7-methyl-GTP pyrophosphatase of Xanthomonas oryzae pv. oryzae (strain KACC10331 / KXO85).